Here is a 351-residue protein sequence, read N- to C-terminus: Mannonate dehydratase (351 aa).

This sequence belongs to the mannonate dehydratase family. Fe(2+) is required as a cofactor. Requires Mn(2+) as cofactor.

The catalysed reaction is D-mannonate = 2-dehydro-3-deoxy-D-gluconate + H2O. Its pathway is carbohydrate metabolism; pentose and glucuronate interconversion. Functionally, catalyzes the dehydration of D-mannonate. This is Mannonate dehydratase from Clostridium acetobutylicum (strain ATCC 824 / DSM 792 / JCM 1419 / IAM 19013 / LMG 5710 / NBRC 13948 / NRRL B-527 / VKM B-1787 / 2291 / W).